The sequence spans 748 residues: Spidroin-1 (748 aa).

A run of 25 repeats spans residues 1 to 25, 26 to 38, 39 to 66, 67 to 96, 97 to 130, 131 to 158, 159 to 191, 192 to 204, 205 to 235, 236 to 262, 263 to 292, 293 to 305, 306 to 333, 334 to 360, 361 to 394, 395 to 424, 425 to 458, 459 to 485, 486 to 512, 513 to 525, 526 to 555, 556 to 582, 583 to 612, 613 to 642, and 643 to 655. Positions 1-655 are 25 X approximate tandem repeats; that stretch reads QGAGAAAAAA…ASAAASRLSS (655 aa).

This sequence belongs to the silk fibroin family. In terms of assembly, major subunit, with spidroin 2, of the dragline silk.

Its subcellular location is the secreted. It is found in the extracellular space. In terms of biological role, spiders' major ampullate silk possesses unique characteristics of strength and elasticity. Fibroin consists of pseudocrystalline regions of antiparallel beta-sheet interspersed with elastic amorphous segments. This is Spidroin-1 from Trichonephila clavipes (Golden silk orbweaver).